We begin with the raw amino-acid sequence, 260 residues long: Putative ABC transporter ATP-binding protein PH0132 (260 aa).

In terms of domain architecture, ABC transporter spans 2–234; it reads IEFRDVWFWY…DLEGFGLKEP (233 aa). 34–41 provides a ligand contact to ATP; it reads GPNGSGKT.

Belongs to the ABC transporter superfamily.

The protein localises to the cell membrane. Its function is as follows. Probably part of an ABC transporter complex. Responsible for energy coupling to the transport system. This is Putative ABC transporter ATP-binding protein PH0132 from Pyrococcus horikoshii (strain ATCC 700860 / DSM 12428 / JCM 9974 / NBRC 100139 / OT-3).